The sequence spans 395 residues: Phosphoglycerate kinase (395 aa).

Substrate is bound by residues 22-24, R38, 61-64, R119, and R152; these read DFN and HLGR. ATP is bound by residues K203, G294, E325, and 351–354; that span reads GGDT.

The protein belongs to the phosphoglycerate kinase family. Monomer.

It is found in the cytoplasm. The enzyme catalyses (2R)-3-phosphoglycerate + ATP = (2R)-3-phospho-glyceroyl phosphate + ADP. Its pathway is carbohydrate degradation; glycolysis; pyruvate from D-glyceraldehyde 3-phosphate: step 2/5. In Hydrogenobaculum sp. (strain Y04AAS1), this protein is Phosphoglycerate kinase.